The chain runs to 337 residues: Cysteine proteinase 3 (337 aa).

Residues 1–21 (MRLSITLIFTLIVLSISFISA) form the signal peptide. Residues 22-120 (GNVFSHKQYQ…GLRLNRPQFK (99 aa)) constitute a propeptide, activation peptide. Disulfide bonds link Cys142/Cys185, Cys176/Cys219, and Cys277/Cys326. Residue Cys145 is part of the active site. Catalysis depends on residues His284 and Asn304.

The protein belongs to the peptidase C1 family.

It localises to the lysosome. This is Cysteine proteinase 3 (cprC) from Dictyostelium discoideum (Social amoeba).